Here is a 106-residue protein sequence, read N- to C-terminus: Large ribosomal subunit protein uL24 (106 aa).

Belongs to the universal ribosomal protein uL24 family. Part of the 50S ribosomal subunit.

Functionally, one of two assembly initiator proteins, it binds directly to the 5'-end of the 23S rRNA, where it nucleates assembly of the 50S subunit. In terms of biological role, one of the proteins that surrounds the polypeptide exit tunnel on the outside of the subunit. The sequence is that of Large ribosomal subunit protein uL24 from Verminephrobacter eiseniae (strain EF01-2).